Here is a 205-residue protein sequence, read N- to C-terminus: LexA repressor (205 aa).

A DNA-binding region (H-T-H motif) is located at residues 29 to 49 (IRDICKATGLRSSSTVYNYLN). Residues serine 128 and lysine 165 each act as for autocatalytic cleavage activity in the active site.

It belongs to the peptidase S24 family. Homodimer.

The catalysed reaction is Hydrolysis of Ala-|-Gly bond in repressor LexA.. Represses a number of genes involved in the response to DNA damage (SOS response), including recA and lexA. In the presence of single-stranded DNA, RecA interacts with LexA causing an autocatalytic cleavage which disrupts the DNA-binding part of LexA, leading to derepression of the SOS regulon and eventually DNA repair. In Moorella thermoacetica (strain ATCC 39073 / JCM 9320), this protein is LexA repressor.